The following is a 529-amino-acid chain: V-set and immunoglobulin domain-containing protein 10 (529 aa).

A signal peptide spans 1–18 (MMITSAVVLYLLLLSHQT). 2 consecutive Ig-like C2-type domains span residues 19-110 (VSEE…QTLS) and 129-217 (PATF…QELL). At 21 to 411 (EEQVQQFVIG…LNVKTSAGNG (391 aa)) the chain is on the extracellular side. 13 N-linked (GlcNAc...) asparagine glycosylation sites follow: Asn-34, Asn-35, Asn-46, Asn-135, Asn-147, Asn-159, Asn-211, Asn-269, Asn-280, Asn-284, Asn-330, Asn-357, and Asn-376. Cys-40 and Cys-96 are oxidised to a cystine. A disulfide bridge connects residues Cys-150 and Cys-199. Residues 317-403 (PTGQPLATAL…GARELEVYLN (87 aa)) enclose the Ig-like C2-type 3 domain. An intrachain disulfide couples Cys-335 to Cys-387. The chain crosses the membrane as a helical span at residues 412-432 (GAIVGIFVSVLVMMIGIVVGV). Over 433 to 529 (TVYTKRDRIC…PQRAELQPAV (97 aa)) the chain is Cytoplasmic.

It is found in the membrane. The sequence is that of V-set and immunoglobulin domain-containing protein 10 (vsig10) from Danio rerio (Zebrafish).